Here is a 174-residue protein sequence, read N- to C-terminus: N5-carboxyaminoimidazole ribonucleotide mutase (174 aa).

Substrate contacts are provided by S16, D19, and R46.

This sequence belongs to the AIR carboxylase family. Class I subfamily.

It carries out the reaction 5-carboxyamino-1-(5-phospho-D-ribosyl)imidazole + H(+) = 5-amino-1-(5-phospho-D-ribosyl)imidazole-4-carboxylate. It functions in the pathway purine metabolism; IMP biosynthesis via de novo pathway; 5-amino-1-(5-phospho-D-ribosyl)imidazole-4-carboxylate from 5-amino-1-(5-phospho-D-ribosyl)imidazole (N5-CAIR route): step 2/2. Its function is as follows. Catalyzes the conversion of N5-carboxyaminoimidazole ribonucleotide (N5-CAIR) to 4-carboxy-5-aminoimidazole ribonucleotide (CAIR). The chain is N5-carboxyaminoimidazole ribonucleotide mutase from Mycobacterium tuberculosis (strain CDC 1551 / Oshkosh).